The sequence spans 426 residues: Adenylosuccinate synthetase (426 aa).

Residues 12–18 (GDEGKGK) and 40–42 (GHT) each bind GTP. The active-site Proton acceptor is the aspartate 13. Mg(2+) contacts are provided by aspartate 13 and glycine 40. Residues 13–16 (DEGK), 38–41 (NAGH), threonine 125, arginine 139, glutamine 221, threonine 236, and arginine 300 each bind IMP. Residue histidine 41 is the Proton donor of the active site. 296–302 (TTTGRPR) lines the substrate pocket. Residues arginine 302, 328 to 330 (KLD), and 410 to 412 (AVG) contribute to the GTP site.

The protein belongs to the adenylosuccinate synthetase family. As to quaternary structure, homodimer. The cofactor is Mg(2+).

It is found in the cytoplasm. It carries out the reaction IMP + L-aspartate + GTP = N(6)-(1,2-dicarboxyethyl)-AMP + GDP + phosphate + 2 H(+). It functions in the pathway purine metabolism; AMP biosynthesis via de novo pathway; AMP from IMP: step 1/2. Its function is as follows. Plays an important role in the de novo pathway of purine nucleotide biosynthesis. Catalyzes the first committed step in the biosynthesis of AMP from IMP. The sequence is that of Adenylosuccinate synthetase from Syntrophomonas wolfei subsp. wolfei (strain DSM 2245B / Goettingen).